The chain runs to 835 residues: MMPLLHLAGTLIMALFLSCLRPGSLNPCIEVLPNITYQCMDQNLSKIPHDIPYSTKNLDLSFNPLKILRSYSFTNFSQLQWLDLSRCEIETIEDKAWHGLNQLSTLVLTGNPIKSFSPGSFSGLTNLENLVAVETKMTSLEGFHIGQLISLKKLNVAHNLIHSFKLPEYFSNLTNLEHVDLSYNYIQTISVKDLQFLRENPQVNLSLDLSLNPIDSIQAQAFQGIRLHELTLRSNFNSSNVLKMCLQNMTGLHVHRLILGEFKNERNLESFDRSVMEGLCNVSIDEFRLTYINHFSDDIYNLNCLANISAMSFTGVHIKHIADVPRHFKWQSLSIIRCHLKPFPKLSLPFLKSWTLTTNREDISFGQLALPSLRYLDLSRNAMSFRGCCSYSDFGTNNLKYLDLSFNGVILMSANFMGLEELEYLDFQHSTLKKVTEFSVFLSLEKLLYLDISYTNTKIDFDGIFLGLISLNTLKMAGNSFKDNTLSNVFTNTTNLTFLDLSKCQLEQISRGVFDTLYRLQLLNMSHNNLLFLDPSHYKQLYSLRTLDCSFNRIETSKGILQHFPKSLAVFNLTNNSVACICEYQNFLQWVKDQKMFLVNVEQMKCASPIDMKASLVLDFTNSTCYIYKTIISVSVVSVLVVATVAFLIYHFYFHLILIAGCKKYSRGESIYDAFVIYSSQNEDWVRNELVKNLEEGVPRFQLCLHYRDFIPGVAIAANIIQEGFHKSRKVIVVVSRHFIQSRWCIFEYEIAQTWQFLSSRSGIIFIVLEKVEKSLLRQQVELYRLLSRNTYLEWEDNALGRHIFWRRLKKALLDGKALNPDETSEEEQEATTLT.

The N-terminal stretch at 1-25 is a signal peptide; sequence MMPLLHLAGTLIMALFLSCLRPGSL. Residues 26 to 638 are Extracellular-facing; that stretch reads NPCIEVLPNI…KTIISVSVVS (613 aa). Cys28 and Cys39 are joined by a disulfide. Residues Asn34, Asn43, and Asn75 are each glycosylated (N-linked (GlcNAc...) asparagine). 5 LRR repeats span residues 54–75, 78–99, 102–123, 126–147, and 150–171; these read STKN…SFTN, QLQW…AWHG, QLST…SFSG, NLEN…HIGQ, and SLKK…EYFS. Asn172 is a glycosylation site (N-linked (GlcNAc...) asparagine). 3 LRR repeats span residues 175-198, 204-224, and 226-247; these read NLEH…QFLR, NLSL…AFQG, and RLHE…MCLQ. 5 N-linked (GlcNAc...) asparagine glycosylation sites follow: Asn204, Asn237, Asn248, Asn281, and Asn307. A disulfide bridge connects residues Cys280 and Cys304. One copy of the LRR 9 repeat lies at 372–381; the sequence is SLRYLDLSRN. Cys388 and Cys389 are disulfide-bonded. 4 LRR repeats span residues 398-420, 421-442, 446-467, and 470-491; these read NLKY…MGLE, ELEY…SVFL, KLLY…IFLG, and SLNT…NVFT. N-linked (GlcNAc...) asparagine glycans are attached at residues Asn492, Asn495, and Asn524. LRR repeat units lie at residues 495 to 516, 519 to 540, and 543 to 564; these read NLTF…VFDT, RLQL…HYKQ, and SLRT…LQHF. 2 N-linked (GlcNAc...) asparagine glycosylation sites follow: Asn572 and Asn575. An LRRCT domain is found at 576–627; it reads NSVACICEYQNFLQWVKDQKMFLVNVEQMKCASPIDMKASLVLDFTNSTCYI. Disulfide bonds link Cys580–Cys606 and Cys582–Cys625. A glycan (N-linked (GlcNAc...) asparagine) is linked at Asn622. A helical membrane pass occupies residues 639–659; the sequence is VLVVATVAFLIYHFYFHLILI. Topologically, residues 660 to 835 are cytoplasmic; it reads AGCKKYSRGE…EEEQEATTLT (176 aa). One can recognise a TIR domain in the interval 670–813; it reads SIYDAFVIYS…IFWRRLKKAL (144 aa).

It belongs to the Toll-like receptor family. In terms of assembly, belongs to the lipopolysaccharide (LPS) receptor, a multi-protein complex containing at least CD14, LY96 and TLR4. Binding to bacterial LPS leads to homodimerization. Interacts with LY96 via the extracellular domain. Interacts with MYD88 and TIRAP via their respective TIR domains. Interacts with TICAM2. Interacts with NOX4. Interacts with CNPY3 and HSP90B1; this interaction is required for proper folding in the endoplasmic reticulum. Interacts with MAP3K21; this interaction leads to negative regulation of TLR4 signaling. Interacts with CD36, following CD36 stimulation by oxLDL or amyloid-beta 42, and forms a heterodimer with TLR6. The trimeric complex is internalized and triggers inflammatory response. LYN kinase activity facilitates TLR4-TLR6 heterodimerization and signal initiation. Interacts with TICAM1 in response to LPS in a WDFY1-dependent manner. Interacts with WDFY1 in response to LPS. Interacts with SMPDL3B. Interacts with CEACAM1; upon lipopolysaccharide stimulation, forms a complex including TLR4 and the phosphorylated form of SYK and CEACAM1, which in turn, recruits PTPN6 that dephosphorylates SYK, reducing the production of reactive oxygen species (ROS) and lysosome disruption, which in turn, reduces the activity of the inflammasome. Interacts with RFTN1; the interaction occurs in response to lipopolysaccharide stimulation. Interacts with SCIMP; the interaction occurs in response to lipopolysaccharide stimulation and is enhanced by phosphorylation of SCIMP by LYN. This interaction facilitates the phosphorylation of TLR4 by LYN which elicits a selective cytokine response in macrophages. Interacts with TRAF3IP3. Interacts with TREM1; this interaction enhances TLR4-mediated inflammatory response. Interacts with ZG16B/PAUF. Interacts with CD82; this interaction inhibits TLR4-mediated signaling pathway. In terms of processing, phosphorylated on tyrosine residues by LYN after binding lipopolysaccharide. Post-translationally, ubiquitinated by RNF128 via 'Lys-28'-linked polyubiquitin chains, leading to proteasomal degradation.

It is found in the cell membrane. The protein localises to the early endosome. It localises to the cell projection. The protein resides in the ruffle. Transmembrane receptor that functions as a pattern recognition receptor recognizing pathogen- and damage-associated molecular patterns (PAMPs and DAMPs) to induce innate immune responses via downstream signaling pathways. At the plasma membrane, cooperates with LY96 to mediate the innate immune response to bacterial lipopolysaccharide (LPS). Also involved in LPS-independent inflammatory responses triggered by free fatty acids, such as palmitate, and Ni(2+). Mechanistically, acts via MYD88, TIRAP and TRAF6, leading to NF-kappa-B activation, cytokine secretion and the inflammatory response. Alternatively, CD14-mediated TLR4 internalization via endocytosis is associated with the initiation of a MYD88-independent signaling via the TICAM1-TBK1-IRF3 axis leading to type I interferon production. In addition to the secretion of proinflammatory cytokines, initiates the activation of NLRP3 inflammasome and formation of a positive feedback loop between autophagy and NF-kappa-B signaling cascade. In complex with TLR6, promotes inflammation in monocytes/macrophages by associating with TLR6 and the receptor CD86. Upon ligand binding, such as oxLDL or amyloid-beta 42, the TLR4:TLR6 complex is internalized and triggers inflammatory response, leading to NF-kappa-B-dependent production of CXCL1, CXCL2 and CCL9 cytokines, via MYD88 signaling pathway, and CCL5 cytokine, via TICAM1 signaling pathway. In myeloid dendritic cells, vesicular stomatitis virus glycoprotein G but not LPS promotes the activation of IRF7, leading to type I IFN production in a CD14-dependent manner. The sequence is that of Toll-like receptor 4 (Tlr4) from Rattus norvegicus (Rat).